The primary structure comprises 106 residues: Transcriptional and immune response regulator (106 aa).

As to quaternary structure, monomer. Interacts with NOTCH2 (via ANK repeats), the interaction inhibits the nuclear translocation of NOTCH2 N2ICD. Interacts (C-terminus) with CBY1 (C-terminus), TCIM competes with CTNNB1 for the interaction with CBY1. In terms of tissue distribution, ubiquitous. Expressed in thyroid papillary carcinoma. Expressed in liver, expression levels decrease in hepatocellular carcinoma. Slightly detected in normal lung, its expression is highly induced in lung cancer cells (at protein level).

Its subcellular location is the cytoplasm. It is found in the nucleus. The protein localises to the nucleolus. It localises to the nucleus speckle. Seems to be involved in the regulation of cell growth an differentiation, may play different and opposite roles depending on the tissue or cell type. May enhance the WNT-CTNNB1 pathway by relieving antagonistic activity of CBY1. Enhances the proliferation of follicular dendritic cells. Plays a role in the mitogen-activated MAPK2/3 signaling pathway, positively regulates G1-to-S-phase transition of the cell cycle. In endothelial cells, enhances key inflammatory mediators and inflammatory response through the modulation of NF-kappaB transcriptional regulatory activity. Involved in the regulation of heat shock response, seems to play a positive feedback with HSF1 to modulate heat-shock downstream gene expression. Plays a role in the regulation of hematopoiesis even if the mechanisms are unknown. In cancers such as thyroid or lung cancer, it has been described as promoter of cell proliferation, G1-to-S-phase transition and inhibitor of apoptosis. However, it negatively regulates self-renewal of liver cancer cells via suppresion of NOTCH2 signaling. The polypeptide is Transcriptional and immune response regulator (Homo sapiens (Human)).